A 259-amino-acid polypeptide reads, in one-letter code: Proteasome subunit alpha 1 (259 aa).

The segment at 231-259 (LVPAEPAAASESAPEPKPDTETKPADTQD) is disordered. Positions 233-243 (PAEPAAASESA) are enriched in low complexity. Positions 244 to 259 (PEPKPDTETKPADTQD) are enriched in basic and acidic residues.

The protein belongs to the peptidase T1A family. As to quaternary structure, the 20S proteasome core is composed of 14 alpha and 14 beta subunits that assemble into four stacked heptameric rings, resulting in a barrel-shaped structure. The two inner rings, each composed of seven catalytic beta subunits, are sandwiched by two outer rings, each composed of seven alpha subunits. All four combinations of alpha- and beta-subunits (beta2-alpha1, beta2-alpha2, beta1-alpha2 and beta1-alpha1) yield fully assembled and proteolytically active proteasomes. The catalytic chamber with the active sites is on the inside of the barrel. Has probably a gated structure, the ends of the cylinder being occluded by the N-termini of the alpha-subunits. Is likely capped by the proteasome-associated ATPase, ARC. The N-terminus is blocked.

The protein localises to the cytoplasm. It participates in protein degradation; proteasomal Pup-dependent pathway. With respect to regulation, the formation of the proteasomal ATPase ARC-20S proteasome complex, likely via the docking of the C-termini of ARC into the intersubunit pockets in the alpha-rings, may trigger opening of the gate for substrate entry. Interconversion between the open-gate and close-gate conformations leads to a dynamic regulation of the 20S proteasome proteolysis activity. Component of the proteasome core, a large protease complex with broad specificity involved in protein degradation. The R.erythropolis proteasomes are able to cleave oligopeptides after Tyr, Phe and Leu, very poorly after Arg but not after Glu. Thus, displays chymotrypsin-like activity, low trypsin-like activity but no caspase-like activity. The protein is Proteasome subunit alpha 1 of Rhodococcus erythropolis (Arthrobacter picolinophilus).